The following is a 102-amino-acid chain: Large ribosomal subunit protein uL23 (102 aa).

Belongs to the universal ribosomal protein uL23 family. In terms of assembly, part of the 50S ribosomal subunit. Contacts protein L29, and trigger factor when it is bound to the ribosome.

One of the early assembly proteins it binds 23S rRNA. One of the proteins that surrounds the polypeptide exit tunnel on the outside of the ribosome. Forms the main docking site for trigger factor binding to the ribosome. In Chromobacterium violaceum (strain ATCC 12472 / DSM 30191 / JCM 1249 / CCUG 213 / NBRC 12614 / NCIMB 9131 / NCTC 9757 / MK), this protein is Large ribosomal subunit protein uL23.